The primary structure comprises 240 residues: VSFNYTEFKDDGSLILQGDAKIWTDGRLAMPTDPLVNNPKTTRSAGRALYATPVPIWDSATGNVASFVTSFNFLFVIRELKYTPTDGLVFFLAPVGTEIPSGSTGGFLGIFDGSNGFNQFVAVEFDSYHNIWDPKSLRSSHVGIDVNSIMSLKAVNWNRVSGSLEKATIIYDSQTNILSVVMTSQNGQITTIYGTIDLKTVLPEKVSVGFSATTGNPEREKHDIYSWSFTSTLKEPEEQA.

N-linked (GlcNAc...) asparagine glycosylation occurs at asparagine 4. Mn(2+) is bound by residues glutamate 124 and aspartate 126. Ca(2+) contacts are provided by aspartate 126, tyrosine 128, asparagine 130, and aspartate 133. Mn(2+)-binding residues include aspartate 133 and histidine 141.

Belongs to the leguminous lectin family.

L-fucose specific lectin. The polypeptide is Anti-H(O) lectin (Lotus tetragonolobus (Winged pea)).